Reading from the N-terminus, the 357-residue chain is uncharacterized protein (357 aa).

An HEAT repeat occupies 173 to 211 (VLPILEKLMQDESLYVRKSVANNLNDISKTHPHLLRKVA).

This is an uncharacterized protein from Bacillus subtilis (strain 168).